The chain runs to 457 residues: Multidrug resistance protein MdtK (457 aa).

12 helical membrane passes run 11 to 31 (LLALAIPVILAQVAQTAMGFV), 53 to 73 (IWLPAILFGHGLLLALTPVIA), 93 to 113 (WLAGFVSVLVMIVLWNAGYII), 127 to 147 (AVGYLRALLWGAPGYLFFQVA), 160 to 180 (GMVMGFLGLLVNIPVNYIFIY), 188 to 208 (LGGIGCGVATAAVYWVMFIAM), 243 to 263 (LPIALALFFEVTLFAVVALLV), 276 to 296 (IALNFSSLMFVLPMSLAAAVT), 314 to 334 (AARTGLGVGICMAVVTAIFTV), 350 to 370 (VVALAAQLMLLAAVYQISDSI), 387 to 407 (IFFITFTAYWVLGLPSGYILA), and 418 to 438 (PAGFWMGFIIGLTSAAVLMML).

The protein belongs to the multi antimicrobial extrusion (MATE) (TC 2.A.66.1) family. MdtK subfamily.

It is found in the cell inner membrane. In terms of biological role, multidrug efflux pump that functions probably as a Na(+)/drug antiporter. The chain is Multidrug resistance protein MdtK from Salmonella heidelberg (strain SL476).